We begin with the raw amino-acid sequence, 454 residues long: Ribosomal protein uS12 methylthiotransferase RimO (454 aa).

Residues 19-129 (AKVGFVSLGC…VLAQVHEHVA (111 aa)) form the MTTase N-terminal domain. Positions 28, 64, 93, 161, 165, and 168 each coordinate [4Fe-4S] cluster. The 238-residue stretch at 147–384 (LTPKHYAYLK…MAVQAKISSD (238 aa)) folds into the Radical SAM core domain. Residues 387-453 (QVRIGQEYLI…EHDVWGVRVE (67 aa)) enclose the TRAM domain.

It belongs to the methylthiotransferase family. RimO subfamily. [4Fe-4S] cluster serves as cofactor.

It is found in the cytoplasm. The enzyme catalyses L-aspartate(89)-[ribosomal protein uS12]-hydrogen + (sulfur carrier)-SH + AH2 + 2 S-adenosyl-L-methionine = 3-methylsulfanyl-L-aspartate(89)-[ribosomal protein uS12]-hydrogen + (sulfur carrier)-H + 5'-deoxyadenosine + L-methionine + A + S-adenosyl-L-homocysteine + 2 H(+). Functionally, catalyzes the methylthiolation of an aspartic acid residue of ribosomal protein uS12. This Colwellia psychrerythraea (strain 34H / ATCC BAA-681) (Vibrio psychroerythus) protein is Ribosomal protein uS12 methylthiotransferase RimO.